A 280-amino-acid chain; its full sequence is Fructose-1,6-bisphosphatase class 1 (280 aa).

4 residues coordinate Mg(2+): Glu64, Asp83, Leu85, and Asp86. Substrate contacts are provided by residues 86 to 89, Tyr189, and Lys220; that span reads DGSS. Glu226 is a Mg(2+) binding site.

Belongs to the FBPase class 1 family. As to quaternary structure, homotetramer. Requires Mg(2+) as cofactor.

Its subcellular location is the cytoplasm. The enzyme catalyses beta-D-fructose 1,6-bisphosphate + H2O = beta-D-fructose 6-phosphate + phosphate. It functions in the pathway carbohydrate biosynthesis; gluconeogenesis. The polypeptide is Fructose-1,6-bisphosphatase class 1 (Campylobacter jejuni subsp. jejuni serotype O:23/36 (strain 81-176)).